The primary structure comprises 124 residues: Small ribosomal subunit protein uS12 (124 aa).

Aspartate 89 carries the post-translational modification 3-methylthioaspartic acid. A disordered region spans residues 104–124 (SAGVQNRNRGRSKYGTKRPKK). Residues 111-124 (NRGRSKYGTKRPKK) are compositionally biased toward basic residues.

This sequence belongs to the universal ribosomal protein uS12 family. As to quaternary structure, part of the 30S ribosomal subunit. Contacts proteins S8 and S17. May interact with IF1 in the 30S initiation complex.

Functionally, with S4 and S5 plays an important role in translational accuracy. In terms of biological role, interacts with and stabilizes bases of the 16S rRNA that are involved in tRNA selection in the A site and with the mRNA backbone. Located at the interface of the 30S and 50S subunits, it traverses the body of the 30S subunit contacting proteins on the other side and probably holding the rRNA structure together. The combined cluster of proteins S8, S12 and S17 appears to hold together the shoulder and platform of the 30S subunit. This chain is Small ribosomal subunit protein uS12, found in Pelotomaculum thermopropionicum (strain DSM 13744 / JCM 10971 / SI).